Reading from the N-terminus, the 415-residue chain is Succinate--CoA ligase [GDP-forming] subunit beta, mitochondrial (415 aa).

The transit peptide at M1–F19 directs the protein to the mitochondrion. The 231-residue stretch at K28–F258 folds into the ATP-grasp domain. GTP contacts are provided by residues Q39, G72 to G74, and V130. Positions 227 and 241 each coordinate Mg(2+). Substrate contacts are provided by residues N292 and G349 to V351.

It belongs to the succinate/malate CoA ligase beta subunit family. GTP-specific subunit beta subfamily. In terms of assembly, heterodimer of an alpha and a beta subunit. The beta subunit determines specificity for GTP. Mg(2+) is required as a cofactor.

It is found in the mitochondrion. It catalyses the reaction GTP + succinate + CoA = succinyl-CoA + GDP + phosphate. The protein operates within carbohydrate metabolism; tricarboxylic acid cycle; succinate from succinyl-CoA (ligase route): step 1/1. Its function is as follows. GTP-specific succinyl-CoA synthetase functions in the citric acid cycle (TCA), coupling the hydrolysis of succinyl-CoA to the synthesis of GTP and thus represents the only step of substrate-level phosphorylation in the TCA. The beta subunit provides nucleotide specificity of the enzyme and binds the substrate succinate, while the binding sites for coenzyme A and phosphate are found in the alpha subunit. This is Succinate--CoA ligase [GDP-forming] subunit beta, mitochondrial from Caenorhabditis elegans.